The primary structure comprises 291 residues: uncharacterized protein (291 aa).

A run of 4 helical transmembrane segments spans residues I13 to I33, I84 to I104, L111 to I131, and L219 to L239.

It localises to the cell membrane. This is an uncharacterized protein from Ureaplasma parvum serovar 3 (strain ATCC 700970).